The chain runs to 975 residues: Nesprin-3 (975 aa).

The Cytoplasmic portion of the chain corresponds to 1–925; the sequence is MTQQPQEDFE…PCSLLQKACR (925 aa). Spectrin repeat units follow at residues 220-325 and 647-740; these read QDHE…RLRG and REHC…QALR. A disordered region spans residues 778-798; it reads LINPQDPIPRRQHGANPLEGH. The KASH domain maps to 917–975; that stretch reads CSLLQKACRVALPLQLLLLLFLLLLFLLPAGEEERSCALANNFARSFALMLRYNGPPPT. The chain crosses the membrane as a helical; Anchor for type IV membrane protein span at residues 926 to 946; the sequence is VALPLQLLLLLFLLLLFLLPA. At 947–975 the chain is on the perinuclear space side; sequence GEEERSCALANNFARSFALMLRYNGPPPT.

This sequence belongs to the nesprin family. In terms of assembly, core component of LINC complexes which are composed of inner nuclear membrane SUN domain-containing proteins coupled to outer nuclear membrane KASH domain-containing nesprins. SUN and KASH domain-containing proteins seem to bind each other promiscuously; however, differentially expression of LINC complex constituents can give rise to specific assemblies. Interacts with SUN1 and SUN2; probably forming respective LINC complexes. Interacts with PLEC (via actin-binding domain). Interacts with DST. Interacts with SYNE1. Interacts (via KASH domain) with TOR1A (ATP-bound); the interaction is required for SYNE3 nuclear envelope localization. The disulfid bond with SUN1 or SUN2 is required for stability of the respective LINC complex under tensile forces. As to expression, ubiquitous.

The protein resides in the nucleus outer membrane. Its subcellular location is the nucleus envelope. The protein localises to the rough endoplasmic reticulum. In terms of biological role, as a component of the LINC (LInker of Nucleoskeleton and Cytoskeleton) complex involved in the connection between the nuclear lamina and the cytoskeleton. The nucleocytoplasmic interactions established by the LINC complex play an important role in the transmission of mechanical forces across the nuclear envelope and in nuclear movement and positioning. Probable anchoring protein which tethers the nucleus to the cytoskeleton by binding PLEC which can associate with the intermediate filament system. Plays a role in the regulation of aortic epithelial cell morphology, and is required for flow-induced centrosome polarization and directional migration in aortic endothelial cells. This is Nesprin-3 (Syne3) from Mus musculus (Mouse).